A 603-amino-acid chain; its full sequence is MTMYATMTTLALTSLIPPILGALINPNKKNSYPHYVKSIIASTFIISLFPTTMFMCLDQETIISNWHWATTQTTQLSLSFKLDYFSMTFIPVALFVTWSIMEFSLWYMDSDPNINQFFKYLLIFLITMLILVTANNLFQLFIGWEGVGIMSFLLISWWYARTDANTAAIQAILYNRIGDIGFVLALAWFLLHSNSWDPQQMILLSTNTDLTPLLGFLLAAAGKSAQLGLHPWLPSAMEGPTPVSALLHSSTMVVAGIFLLIRFYPLAENNPLIQTLTLCLGAITTLFAAVCALTQNDIKKIVAFSTSSQLGLMMVTIGINQPHLAFLHICTHAFFKAMLFMCSGSIIHNLNNEQDIRKMGGLLKTMPLTSTSLTIGSLALAGMPFLTGFYSKDLIIETANMSYTNAWALSITLIATSLTSAYSTRMILLTLTGQPRFPTLTNINENNPTLLNPIKRLTIGSLFAGFLITNNILPMSTPQVTIPLYLKLTALGVTSLGLLTALDLNYLTSKLKMKSPLYTFHFSNMLGFYPNIMHRSIPYLGLLTSQNLPLLLLDLTWLEKLLPKTISQYQISASITTSTQKGMIKLYFLSFFFPLILTLLLIT.

16 consecutive transmembrane segments (helical) span residues 4–24 (YATMTTLALTSLIPPILGALI), 38–58 (SIIASTFIISLFPTTMFMCLD), 87–107 (MTFIPVALFVTWSIMEFSLWY), 122–142 (LIFLITMLILVTANNLFQLFI), 144–160 (WEGVGIMSFLLISWWYA), 171–191 (AILYNRIGDIGFVLALAWFLL), 211–233 (TPLLGFLLAAAGKSAQLGLHPWL), 241–261 (TPVSALLHSSTMVVAGIFLLI), 272–292 (LIQTLTLCLGAITTLFAAVCA), 301–320 (IVAFSTSSQLGLMMVTIGIN), 325–347 (AFLHICTHAFFKAMLFMCSGSII), 370–390 (STSLTIGSLALAGMPFLTGFY), 405–422 (NAWALSITLIATSLTSAY), 457–477 (LTIGSLFAGFLITNNILPMST), 482–502 (IPLYLKLTALGVTSLGLLTAL), and 582–602 (GMIKLYFLSFFFPLILTLLLI).

Belongs to the complex I subunit 5 family. In terms of assembly, core subunit of respiratory chain NADH dehydrogenase (Complex I) which is composed of 45 different subunits.

Its subcellular location is the mitochondrion inner membrane. It carries out the reaction a ubiquinone + NADH + 5 H(+)(in) = a ubiquinol + NAD(+) + 4 H(+)(out). Functionally, core subunit of the mitochondrial membrane respiratory chain NADH dehydrogenase (Complex I) which catalyzes electron transfer from NADH through the respiratory chain, using ubiquinone as an electron acceptor. Essential for the catalytic activity and assembly of complex I. The chain is NADH-ubiquinone oxidoreductase chain 5 (MT-ND5) from Pan troglodytes (Chimpanzee).